A 1093-amino-acid chain; its full sequence is Leucine-rich repeats and immunoglobulin-like domains protein 1 (1093 aa).

Residues 1–34 (MARPVRGGLGAPRRSPCLLLLWLLLLRLEPVTAA) form the signal peptide. The LRRNT domain maps to 35–68 (AGPRAPCAAACTCAGDSLDCGGRGLAALPGDLPS). The Extracellular segment spans residues 35-794 (AGPRAPCAAA…GCRKDGTTVG (760 aa)). Cysteines 45 and 54 form a disulfide. 15 LRR repeats span residues 69-90 (WTRSLNLSYNKLSEIDPAGFED), 93-114 (NLQEVYLNNNELTAVPSLGAAS), 116-137 (HVVSLFLQHNKIRSVEGSQLKA), 140-161 (SLEVLDLSLNNITEVRNTCFPH), 164-185 (PIKELNLAGNRIGTLELGAFDG), 189-210 (SLLTLRLSKNRITQLPVRAFKL), 212-233 (RLTQLDLNRNRIRLIEGLTFQG), 236-257 (SLEVLKLQRNNISKLTDGAFWG), 260-281 (KMHVLHLEYNSLVEVNSGSLYG), 284-305 (ALHQLHLSNNSIARIHRKGWSF), 308-329 (KLHELVLSFNNLTRLDEESLAE), 332-353 (SLSVLRLSHNSISHIAEGAFKG), 356-378 (SLRVLDLDHNEISGTIEDTSGAF), 383-404 (SLSKLTLFGNKIKSVAKRAFSG), and 407-428 (GLEHLNLGGNAIRSVQFDAFVK). Asn-74 carries N-linked (GlcNAc...) asparagine glycosylation. N-linked (GlcNAc...) asparagine glycosylation occurs at Asn-150. N-linked (GlcNAc...) asparagine glycosylation occurs at Asn-246. Residues Asn-292 and Asn-318 are each glycosylated (N-linked (GlcNAc...) asparagine). The LRRCT domain maps to 440–491 (DSFLCDCQLKWLPPWLIGRMLQAFVTATCAHPESLKGQSIFSVPPESFVCDD). Intrachain disulfides connect Cys-444–Cys-468, Cys-446–Cys-489, Cys-516–Cys-577, and Cys-620–Cys-672. Ig-like C2-type domains are found at residues 495–594 (PQII…ARLT), 599–688 (PSFT…ATLT), and 693–779 (PSLV…SQLS). N-linked (GlcNAc...) asparagine glycosylation is present at Asn-684. A disulfide bond links Cys-714 and Cys-763. A helical transmembrane segment spans residues 795-815 (IFTIAVVSSIVLTSLVWVCII). Topologically, residues 816-1093 (YQTRKKSEEY…RVPLLLAPKS (278 aa)) are cytoplasmic. 2 disordered regions span residues 946-983 (AFHPQPVSRDSAQPSAPNGPEPGGSDQEHSPHHQCSRT) and 1063-1093 (PKACDASPESTPLTGQLPGKQRVPLLLAPKS).

As to quaternary structure, interacts (via extracellular LRR and Ig-like domains) with EGFR/ERBB1, ERBB2, ERBB3 and ERBB4 (via extracellular domain). The physiological relevance of the interaction is controversial; LRIG1 may have low affinity for EGFR, and interaction may occur only when high levels of both proteins are present. Widely expressed.

The protein resides in the cell membrane. Acts as a feedback negative regulator of signaling by receptor tyrosine kinases, through a mechanism that involves enhancement of receptor ubiquitination and accelerated intracellular degradation. The chain is Leucine-rich repeats and immunoglobulin-like domains protein 1 from Homo sapiens (Human).